Reading from the N-terminus, the 341-residue chain is Protein YIPF3 (341 aa).

The Cytoplasmic portion of the chain corresponds to 1 to 146 (MANSSGSSRN…PVKMISFPQK (146 aa)). A disordered region spans residues 26 to 46 (GGGAAVIDMENMDDTSGSSFE). The chain crosses the membrane as a helical span at residues 147 to 167 (IAGELYGPLMLVFTMVAILLH). Residues 168 to 185 (GMKSSGTIIREGTLMGTA) are Lumenal-facing. Residues 186–206 (IGTCFGYWLGVSSFIYFLAYL) traverse the membrane as a helical segment. Over 207–212 (CNAQIT) the chain is Cytoplasmic. The helical transmembrane segment at 213–233 (MLQTLSLLGYGLFGHCIVLFI) threads the bilayer. At 234 to 242 (TYNIHFHSL) the chain is on the lumenal side. The chain crosses the membrane as a helical span at residues 243–263 (FYIFWLCIGGLSTLRMVAVLL). The Cytoplasmic portion of the chain corresponds to 264–272 (SRTVGHTQR). A helical transmembrane segment spans residues 273–293 (LIVCGTMAALHMLFLLYLHFA). At 294–341 (YHKVVEGILDTLDGQNVPLPIQRVARDLPVGPNTVLNATVQVLLAHSR) the chain is on the lumenal side. N330 carries an N-linked (GlcNAc...) asparagine glycan.

The protein belongs to the YIP1 family.

The protein resides in the cell membrane. The protein localises to the golgi apparatus. It is found in the cis-Golgi network membrane. Its subcellular location is the cytoplasm. In terms of biological role, involved in the maintenance of the Golgi structure. May play a role in hematopoiesis. In Xenopus laevis (African clawed frog), this protein is Protein YIPF3 (yipf3).